The sequence spans 252 residues: Phosphomannomutase (252 aa).

Asp-13 serves as the catalytic Nucleophile. Residues Asp-13 and Asp-15 each coordinate Mg(2+). The active-site Proton donor/acceptor is Asp-15. 6 residues coordinate alpha-D-mannose 1-phosphate: Arg-22, Arg-124, Arg-135, Arg-142, Ser-180, and Asp-182. Residues Asp-208, Tyr-220, and Thr-225 each coordinate Mg(2+).

It belongs to the eukaryotic PMM family. Homodimer. Mg(2+) serves as cofactor. As to expression, expressed in roots, stems, leaves, flowers and immature fruits.

Its subcellular location is the cytoplasm. It carries out the reaction alpha-D-mannose 1-phosphate = D-mannose 6-phosphate. Its pathway is nucleotide-sugar biosynthesis; GDP-alpha-D-mannose biosynthesis; alpha-D-mannose 1-phosphate from D-fructose 6-phosphate: step 2/2. Its function is as follows. Catalyzes the interconversion of mannose-6-phosphate to mannose-1-phosphate, the precursor for the synthesis of GDP-mannose. GDP-mannose is an essential sugar nucleotide for the synthesis of D-mannose-containing cell wall polysaccharides (galactomannans and glucomannans), glycolipids, glycoproteins and the antioxidant L-ascorbate. Can complement the yeast temperature-sensitive mutant sec53-6. The sequence is that of Phosphomannomutase from Nicotiana benthamiana.